A 228-amino-acid polypeptide reads, in one-letter code: NOI-like protein (228 aa).

A compositionally biased stretch (basic and acidic residues) spans 56–75 (AQDHQHSEKHHNDTSTDYHV). Disordered stretches follow at residues 56–87 (AQDH…HRRE) and 99–133 (RPHR…RNSD). Over residues 76 to 86 (VKQHRRKHHRR) the composition is skewed to basic residues. Residues 118-133 (HGTSATMSSSVKRNSD) show a composition bias toward polar residues.

The protein belongs to the RIN4 family.

The chain is NOI-like protein from Elaeis oleifera (American oil palm).